We begin with the raw amino-acid sequence, 222 residues long: Glutathione S-transferase A6 (222 aa).

A GST N-terminal domain is found at 3 to 83 (EKPLFHYDEA…YFSSKYNLYG (81 aa)). Residues tyrosine 9, arginine 45, 54-55 (QV), and 67-68 (QT) contribute to the glutathione site. One can recognise a GST C-terminal domain in the interval 85-208 (DMKERALIDM…QPGSQRQPPV (124 aa)).

Belongs to the GST superfamily. Alpha family. As to quaternary structure, homodimer or heterodimer of GSTA1 and GSTA2.

It is found in the cytoplasm. The enzyme catalyses RX + glutathione = an S-substituted glutathione + a halide anion + H(+). Its function is as follows. Conjugation of reduced glutathione to a wide number of exogenous and endogenous hydrophobic electrophiles. In Rattus norvegicus (Rat), this protein is Glutathione S-transferase A6 (Gsta6).